A 602-amino-acid polypeptide reads, in one-letter code: Type 2 DNA topoisomerase 6 subunit B (602 aa).

Residues N40, D71, 92-93 (SR), 102-109 (GQQGIGIS), and K425 each bind ATP.

This sequence belongs to the TOP6B family. In terms of assembly, homodimer. Heterotetramer of two Top6A and two Top6B chains.

The catalysed reaction is ATP-dependent breakage, passage and rejoining of double-stranded DNA.. Its function is as follows. Relaxes both positive and negative superturns and exhibits a strong decatenase activity. The sequence is that of Type 2 DNA topoisomerase 6 subunit B from Archaeoglobus fulgidus (strain ATCC 49558 / DSM 4304 / JCM 9628 / NBRC 100126 / VC-16).